Reading from the N-terminus, the 125-residue chain is Small ribosomal subunit protein mS41 (125 aa).

Residues 1 to 10 (MLSIFGCVRA) constitute a mitochondrion transit peptide. The segment at 103–125 (SFFGGERNRKATVAKWRAEQRNK) is disordered.

The protein belongs to the mitochondrion-specific ribosomal protein mS41 family.

The protein resides in the mitochondrion. Its function is as follows. Involved in telomere length regulation. The polypeptide is Small ribosomal subunit protein mS41 (FYV4) (Candida glabrata (strain ATCC 2001 / BCRC 20586 / JCM 3761 / NBRC 0622 / NRRL Y-65 / CBS 138) (Yeast)).